A 941-amino-acid polypeptide reads, in one-letter code: MMTSNILSRFLPPNGSPSVYETIRQHDNHSDASDVEERAGMAFEDEHGDRFSDRELEDALADAGRDDSPGPSEPFLPRSPPTKRDEGGFLKAGSRRRKFSRSGRIHAASPRHKFDDSDDDVPPSLLVEGDQDDDDVLRSKLPPPPRSIDPPNVEPPPRPSPRDDRVHWEAARDRLPLHDTNRRAHHASLWSAGYPNLALVDPKEKALWMWANVENLDNFLKEVYTYFLGNGIWSILLNRVLSLLTFAFVVGFSIFLTNCIDYHKVRGSRTLDDILIQKCTKQMSMSATFLLWLLSFFWIGKAFQYLLDIRRLKHMHDFYHYLLGISDAEIQSISWQEVVSRLMTLRDSNPATAGAVSAKHRKFMGSQSKQRMDAHDIANRLMRKENYLIALINKDILDLTLPIPFLRNRQLFSRTLEWNINLCIMDYVFNEQGQVRTLFLKDTHRRALSEGLRRRFMFAGIMNIFVAPFIVVYFMMHYFFRYFNEYKKNPSQIGSRQYTPLAEWKFREFNELWHLFERRVNMSYPFASRYVDQFPKDKMVQFAGFVAFVSGALASVLALASVVDPELFLGFEITHDRTVLFYLGVFGSIWAVAQGLVPEETNVFDPEYALLEVINFTHYFPGHWKGRLHSDDVRKDFAVLYQMKIVIFLEEILSMIFTPFILWFSLPKCSDRLIDFFREFTVHVDGMGYLCSFAVFDFKKGTNVISQGDTGRRDAARQDLRADYFSTKDGKMLASYYGFLDNYGANPRSGHPSTKRQFHPPPTFPTLGSPSAIEMGNFGDRPAAAGLMGQQSTYGAAPRFGPAGMGDHLSPAPSMLLDPHHQPSASGFRSTHRANPYPRYRASRPPPTISDPIEDEDPPAGKGRSAVKSSPGVGSSGGGIGTSDSNLGESWRMNLVGDEVEEEDEGGENVDTLAGGGGVLGLIQQFQKVNQDNRGRTTVGI.

Residues 1–164 (MMTSNILSRF…PPPRPSPRDD (164 aa)) form a disordered region. Residues 1–239 (MMTSNILSRF…NGIWSILLNR (239 aa)) lie on the Cytoplasmic side of the membrane. Over residues 23–54 (IRQHDNHSDASDVEERAGMAFEDEHGDRFSDR) the composition is skewed to basic and acidic residues. Residues 71-80 (PSEPFLPRSP) are compositionally biased toward pro residues. Residues 93–104 (GSRRRKFSRSGR) are compositionally biased toward basic residues. Residues 141–159 (LPPPPRSIDPPNVEPPPRP) are compositionally biased toward pro residues. The helical transmembrane segment at 240–260 (VLSLLTFAFVVGFSIFLTNCI) threads the bilayer. Over 261–286 (DYHKVRGSRTLDDILIQKCTKQMSMS) the chain is Lumenal. Residues 287–307 (ATFLLWLLSFFWIGKAFQYLL) traverse the membrane as a helical segment. Residues 308–455 (DIRRLKHMHD…RALSEGLRRR (148 aa)) lie on the Cytoplasmic side of the membrane. Residues 456 to 476 (FMFAGIMNIFVAPFIVVYFMM) lie within the membrane without spanning it. Over 477-541 (HYFFRYFNEY…DQFPKDKMVQ (65 aa)) the chain is Cytoplasmic. A helical membrane pass occupies residues 542-562 (FAGFVAFVSGALASVLALASV). Topologically, residues 563-577 (VDPELFLGFEITHDR) are lumenal. Residues 578–598 (TVLFYLGVFGSIWAVAQGLVP) traverse the membrane as a helical segment. Residues 599–644 (EETNVFDPEYALLEVINFTHYFPGHWKGRLHSDDVRKDFAVLYQMK) are Cytoplasmic-facing. Residues 645–665 (IVIFLEEILSMIFTPFILWFS) lie within the membrane without spanning it. The Cytoplasmic portion of the chain corresponds to 666–941 (LPKCSDRLID…DNRGRTTVGI (276 aa)). The disordered stretch occupies residues 795 to 889 (GAAPRFGPAG…IGTSDSNLGE (95 aa)).

It belongs to the ATG9 family. In terms of assembly, homotrimer; forms a homotrimer with a central pore that forms a path between the two membrane leaflets. Phosphorylated by atg1. Atg1 phosphorylation is required for preautophagosome elongation.

The protein resides in the preautophagosomal structure membrane. The protein localises to the cytoplasmic vesicle membrane. It is found in the golgi apparatus membrane. It localises to the endoplasmic reticulum membrane. The enzyme catalyses a 1,2-diacyl-sn-glycero-3-phosphocholine(in) = a 1,2-diacyl-sn-glycero-3-phosphocholine(out). It carries out the reaction a 1,2-diacyl-sn-glycero-3-phospho-L-serine(in) = a 1,2-diacyl-sn-glycero-3-phospho-L-serine(out). The catalysed reaction is a 1,2-diacyl-sn-glycero-3-phosphoethanolamine(in) = a 1,2-diacyl-sn-glycero-3-phosphoethanolamine(out). It catalyses the reaction a 1,2-diacyl-sn-glycero-3-phospho-(1D-myo-inositol-3-phosphate)(in) = a 1,2-diacyl-sn-glycero-3-phospho-(1D-myo-inositol-3-phosphate)(out). Its function is as follows. Phospholipid scramblase involved in autophagy and cytoplasm to vacuole transport (Cvt) vesicle formation. Cycles between the preautophagosomal structure/phagophore assembly site (PAS) and the cytoplasmic vesicle pool and supplies membrane for the growing autophagosome. Lipid scramblase activity plays a key role in preautophagosomal structure/phagophore assembly by distributing the phospholipids that arrive through atg2 from the cytoplasmic to the luminal leaflet of the bilayer, thereby driving autophagosomal membrane expansion. Required for mitophagy. Also involved in endoplasmic reticulum-specific autophagic process and is essential for the survival of cells subjected to severe ER stress. Different machineries are required for anterograde trafficking to the PAS during either the Cvt pathway or bulk autophagy and for retrograde trafficking. The protein is Autophagy-related protein 9 (atg9) of Aspergillus niger (strain ATCC MYA-4892 / CBS 513.88 / FGSC A1513).